A 354-amino-acid chain; its full sequence is 3-isopropylmalate dehydrogenase (354 aa).

73–86 lines the NAD(+) pocket; the sequence is GPAYDKLDRPLRPE. Positions 93, 103, 131, and 221 each coordinate substrate. Asp-221, Asp-245, and Asp-249 together coordinate Mg(2+). Residue 279-291 participates in NAD(+) binding; the sequence is GSAPDIAGQNLAN.

It belongs to the isocitrate and isopropylmalate dehydrogenases family. LeuB type 1 subfamily. Homodimer. Mg(2+) is required as a cofactor. It depends on Mn(2+) as a cofactor.

The protein resides in the cytoplasm. The enzyme catalyses (2R,3S)-3-isopropylmalate + NAD(+) = 4-methyl-2-oxopentanoate + CO2 + NADH. Its pathway is amino-acid biosynthesis; L-leucine biosynthesis; L-leucine from 3-methyl-2-oxobutanoate: step 3/4. In terms of biological role, catalyzes the oxidation of 3-carboxy-2-hydroxy-4-methylpentanoate (3-isopropylmalate) to 3-carboxy-4-methyl-2-oxopentanoate. The product decarboxylates to 4-methyl-2 oxopentanoate. This chain is 3-isopropylmalate dehydrogenase, found in Chromobacterium violaceum (strain ATCC 12472 / DSM 30191 / JCM 1249 / CCUG 213 / NBRC 12614 / NCIMB 9131 / NCTC 9757 / MK).